The primary structure comprises 517 residues: Serine O-succinyltransferase (517 aa).

The N-terminal 46 residues, 1-46 (MSPLNGVARSFPRPFQAVTRRPFRVVQPAIACPSNSRSFNHSRSLR), are a transit peptide targeting the mitochondrion. Over residues 36–64 (SRSFNHSRSLRSTGSQSPAPSPRDSSNPA) the composition is skewed to polar residues. Residues 36-66 (SRSFNHSRSLRSTGSQSPAPSPRDSSNPALS) form a disordered region. In terms of domain architecture, AB hydrolase-1 spans 134-386 (NVILLHTGLS…LTQQLATKKQ (253 aa)). Residues 141-144 (GLSA) form an important for substrate specificity region. S238 acts as the Nucleophile in catalysis. R307 lines the substrate pocket. The disordered stretch occupies residues 413–436 (QPYQEQPSASTSAEQSASASETGS). Low complexity predominate over residues 416–436 (QEQPSASTSAEQSASASETGS). Residues D461 and H498 contribute to the active site. D499 contacts substrate.

This sequence belongs to the AB hydrolase superfamily. MetX family.

It is found in the mitochondrion. It carries out the reaction succinyl-CoA + L-serine = O-succinyl-L-serine + CoA. Its pathway is amino-acid biosynthesis; L-cysteine biosynthesis; L-cysteine from L-serine: step 1/2. In terms of biological role, transfers a succinyl group from succinyl-CoA to L-serine, forming succinyl-L-serine. Also has weak serine acetyl transferase activity and homoserine succinyl transferase activity. The polypeptide is Serine O-succinyltransferase (Emericella nidulans (strain FGSC A4 / ATCC 38163 / CBS 112.46 / NRRL 194 / M139) (Aspergillus nidulans)).